Consider the following 665-residue polypeptide: GRB2-associated-binding protein 2 (665 aa).

A Phosphoserine modification is found at serine 2. One can recognise a PH domain in the interval 8-119; sequence DVVCTGWLRK…WVQSICQICG (112 aa). The segment at 131–184 is disordered; the sequence is RNLSSASHGPRSSPAEFSSSQHLLRERKSSAPSHSSQPTLFTFEPPVSSHMQPT. Residues serine 135, serine 142, serine 143, serine 149, serine 150, serine 160, serine 165, serine 211, serine 220, and serine 261 each carry the phosphoserine modification. Positions 160 to 170 are enriched in polar residues; it reads SAPSHSSQPTL. Threonine 262 carries the post-translational modification Phosphothreonine. Tyrosine 263 carries the phosphotyrosine modification. Threonine 275 is modified (phosphothreonine). A phosphoserine mark is found at serine 278 and serine 282. Threonine 284 bears the Phosphothreonine mark. At tyrosine 290 the chain carries Phosphotyrosine. A Phosphothreonine modification is found at threonine 328. The disordered stretch occupies residues 338–396; that stretch reads VATPGDSAIAPPPRPPKPSQAETSQWGSIQQRPPISENSRSVAATIPRRNTLPAMDNSR. The SH3-binding signature appears at 348–355; the sequence is PPPRPPKP. The span at 357–379 shows a compositional bias: polar residues; it reads QAETSQWGSIQQRPPISENSRSV. The residue at position 365 (serine 365) is a Phosphoserine. Residues threonine 382 and threonine 388 each carry the phosphothreonine modification. Serine 402 carries the post-translational modification Phosphoserine. Threonine 405 is subject to Phosphothreonine. Positions 408 to 445 are disordered; it reads YPARGSGESASWSAEPPGKTAVGRSNSASSDDNYVPMN. Serine 420 carries the phosphoserine modification. Residues 430-439 show a composition bias toward polar residues; it reads GRSNSASSDD. Tyrosine 441 carries the post-translational modification Phosphotyrosine. A Phosphoserine modification is found at serine 469. Residues 491-517 form a disordered region; sequence PSRGSEIQPPPVNRNLKPDRKAKPTPL. Positions 499-508 match the SH3-binding motif; it reads PPPVNRNLKP. Residue serine 532 is modified to Phosphoserine. Polar residues-rich tracts occupy residues 548–566 and 578–600; these read SSSQ…STDS and NPVS…STGS. Disordered stretches follow at residues 548–632 and 646–665; these read SSSQ…KVDY and TMQE…GAKL. Phosphoserine is present on serine 612. The residue at position 632 (tyrosine 632) is a Phosphotyrosine. Over residues 646–659 the composition is skewed to polar residues; that stretch reads TMQEWTDVRQSSEP.

It belongs to the GAB family. In terms of assembly, part of a complex composed of EEIG1, TNFRSF11A/RANK, PLCG2, GAB2, TEC and BTK; complex formation increases in the presence of TNFSF11/RANKL. Interacts with HCK. Interacts with SHC1; may mediate interaction with receptors. Interacts with SYK. Interacts with PI-3 kinase. Interacts with GRB2 (via SH3 2 domain). Interacts (phosphorylated) with PTPN11. Interacts with TNFRSF11A (via cytoplasmic domain). Interacts (phosphorylated) with 14-3-3 family proteins SFN, YWHAB, YWHAE, YWHAG, YWHAH, YWHAQ and YWHAZ; prevents interaction with GRB2 and attenuates GAB2 signaling. Post-translationally, phosphorylated upon EGF stimulation. Phosphorylated on tyrosine residues by HCK upon IL6 signaling. Phosphorylated on tyrosine residue(s) by the thrombopoietin receptor (TPOR), stem cell factor receptor (SCFR), and T-cell and B-cell antigen receptors, gp130, IL-2R and IL-3R. Phosphorylated upon stimulation of TNFRSF11A/RANK by TNFSF11/RANKL. In terms of processing, dephosphorylated by PTPN11. Ubiquitously expressed.

The protein localises to the cytoplasm. The protein resides in the cell membrane. It is found in the membrane raft. In terms of biological role, adapter protein which acts downstream of several membrane receptors including cytokine, antigen, hormone, cell matrix and growth factor receptors to regulate multiple signaling pathways. Regulates osteoclast differentiation mediating the TNFRSF11A/RANK signaling. In allergic response, it plays a role in mast cells activation and degranulation through PI-3-kinase regulation. Also involved in the regulation of cell proliferation and hematopoiesis. The sequence is that of GRB2-associated-binding protein 2 (Gab2) from Mus musculus (Mouse).